Reading from the N-terminus, the 216-residue chain is Large ribosomal subunit protein uL3 (216 aa).

Glutamine 157 carries the N5-methylglutamine modification.

It belongs to the universal ribosomal protein uL3 family. Part of the 50S ribosomal subunit. Forms a cluster with proteins L14 and L19. In terms of processing, methylated by PrmB.

Functionally, one of the primary rRNA binding proteins, it binds directly near the 3'-end of the 23S rRNA, where it nucleates assembly of the 50S subunit. This chain is Large ribosomal subunit protein uL3, found in Xanthomonas oryzae pv. oryzae (strain MAFF 311018).